Consider the following 85-residue polypeptide: MKINKLTLNERKNDILSYFSEINTPFRTSEVAEHLGVSAYQARHYLQCLEKEGKIKRSPVRRGASTLWEISAVTEPSVKTDRIAD.

The protein to E.coli PapI and DaaF.

Its function is as follows. May have a possible regulatory function on the expression of the other AFA-III genes. This is Dr hemagglutinin AFA-III operon regulatory protein AfaF (afaF) from Escherichia coli.